We begin with the raw amino-acid sequence, 846 residues long: Protein kintoun (846 aa).

4 disordered regions span residues 1-21 (MSTA…ERAD), 372-416 (YLSR…PALT), 581-657 (HTSI…DSTI), and 743-846 (HDSS…DDEI). Phosphoserine is present on serine 378. The span at 389 to 403 (PVEDDADGDMPETPE) shows a compositional bias: acidic residues. Composition is skewed to basic residues over residues 596–612 (LHKK…KKQR) and 750–766 (QRKK…RAQQ). Position 770 is a phosphoserine (serine 770). Basic and acidic residues predominate over residues 821 to 832 (TRQDHADADAKN).

The protein belongs to the PIH1 family. Kintoun subfamily. Interacts with Pp1alpha-96A, Pp1-87B, Pp1-13C and flw.

It localises to the cytoplasm. Functionally, required for cytoplasmic pre-assembly of axonemal dyneins, thereby playing a central role in motility in cilia and flagella. Involved in pre-assembly of dynein arm complexes in the cytoplasm before intraflagellar transport loads them for the ciliary compartment. This chain is Protein kintoun, found in Drosophila persimilis (Fruit fly).